A 1095-amino-acid chain; its full sequence is Putative patatin-like phospholipase domain-containing protein M110.7 (1095 aa).

The chain crosses the membrane as a helical span at residues 9-29 (LLLIFENILELCMCITLVILI). Positions 75–113 (HKKRSSKEEMTPDKKRDSSEKISKQPPRELFEPNEQEQV) are disordered. Residues 80–105 (SKEEMTPDKKRDSSEKISKQPPRELF) are compositionally biased toward basic and acidic residues. A nucleoside 3',5'-cyclic phosphate contacts are provided by residues 144–237 (VETL…LTSF), 327–416 (RKYE…IQFL), and 450–509 (IETG…TVMA). A PNPLA domain is found at 768-935 (IVFGGGGARG…VNNLPADIMR (168 aa)). The GXGXXG signature appears at 772–777 (GGGARG). The GXSXG motif lies at 799-803 (GTSIG). Catalysis depends on S801, which acts as the Nucleophile. D922 (proton acceptor) is an active-site residue. A DGA/G motif is present at residues 922-924 (DGA).

The protein belongs to the NTE family.

The protein localises to the membrane. In Caenorhabditis elegans, this protein is Putative patatin-like phospholipase domain-containing protein M110.7.